The chain runs to 161 residues: Cuticle protein 16.8 (161 aa).

At glutamine 1 the chain carries Pyrrolidone carboxylic acid. The span at 1 to 10 shows a compositional bias: pro residues; that stretch reads QSEPAGPPQP. Disordered stretches follow at residues 1–44 and 67–103; these read QSEP…YSYT and ETNEPGTKTSNPADAQIVSNAATDSYSPSPASSPAKP. Positions 8–74 constitute a Chitin-binding type R&amp;R domain; it reads PQPYTFSYDN…TVETNEPGTK (67 aa). A compositionally biased stretch (polar residues) spans 67–86; the sequence is ETNEPGTKTSNPADAQIVSN. Positions 87–103 are enriched in low complexity; that stretch reads AATDSYSPSPASSPAKP.

Its function is as follows. Component of the cuticle of the tick. Binds chitin. This Ixodes ricinus (Common tick) protein is Cuticle protein 16.8.